We begin with the raw amino-acid sequence, 287 residues long: Undecaprenyl-diphosphatase (287 aa).

Transmembrane regions (helical) follow at residues 50 to 70 (PGVS…IAYF), 99 to 119 (IAMA…KLFW), 128 to 148 (LRSV…LAVA), 206 to 226 (FLLG…DALA), 231 to 251 (AGPL…WLAI), and 263 to 283 (TWLF…WWSI).

It belongs to the UppP family.

Its subcellular location is the cell inner membrane. It carries out the reaction di-trans,octa-cis-undecaprenyl diphosphate + H2O = di-trans,octa-cis-undecaprenyl phosphate + phosphate + H(+). Functionally, catalyzes the dephosphorylation of undecaprenyl diphosphate (UPP). Confers resistance to bacitracin. This Parasynechococcus marenigrum (strain WH8102) protein is Undecaprenyl-diphosphatase.